The following is a 339-amino-acid chain: Dihydroorotate dehydrogenase (quinone) (339 aa).

Residues 64–68 and T88 contribute to the FMN site; that span reads AGADK. K68 contributes to the substrate binding site. 113–117 lines the substrate pocket; sequence NRNGF. Positions 141 and 174 each coordinate FMN. N174 contributes to the substrate binding site. Catalysis depends on S177, which acts as the Nucleophile. N179 contacts substrate. FMN is bound by residues K219 and T247. 248–249 provides a ligand contact to substrate; it reads NT. Residues G270, G299, and 320 to 321 each bind FMN; that span reads YS.

The protein belongs to the dihydroorotate dehydrogenase family. Type 2 subfamily. In terms of assembly, monomer. It depends on FMN as a cofactor.

It localises to the cell membrane. The catalysed reaction is (S)-dihydroorotate + a quinone = orotate + a quinol. Its pathway is pyrimidine metabolism; UMP biosynthesis via de novo pathway; orotate from (S)-dihydroorotate (quinone route): step 1/1. Catalyzes the conversion of dihydroorotate to orotate with quinone as electron acceptor. The protein is Dihydroorotate dehydrogenase (quinone) of Haemophilus influenzae (strain 86-028NP).